Here is a 314-residue protein sequence, read N- to C-terminus: Acetaldehyde dehydrogenase 1 (314 aa).

NAD(+) is bound at residue 16–19 (SGNI). The active-site Acyl-thioester intermediate is Cys-134. NAD(+) is bound by residues 165 to 173 (SAGPGTRAN) and Asn-292.

It belongs to the acetaldehyde dehydrogenase family.

It carries out the reaction acetaldehyde + NAD(+) + CoA = acetyl-CoA + NADH + H(+). The chain is Acetaldehyde dehydrogenase 1 (mhpF) from Cupriavidus necator (strain ATCC 17699 / DSM 428 / KCTC 22496 / NCIMB 10442 / H16 / Stanier 337) (Ralstonia eutropha).